A 704-amino-acid chain; its full sequence is Protein polyglycylase TTLL10 (704 aa).

Disordered regions lie at residues 1–32 (MALH…LPSP), 46–125 (GHRA…SVKE), and 137–170 (DADD…PGQG). Positions 93–105 (VSSKRSKRSRIHP) are enriched in basic residues. Residues 114–125 (THEKQMGSSVKE) show a composition bias toward basic and acidic residues. In terms of domain architecture, TTL spans 169 to 540 (QGPFFYIGGT…TCQKSLHSQK (372 aa)). ATP contacts are provided by residues K301, 307 to 308 (QG), 350 to 353 (QRYV), 363 to 365 (KFD), and 406 to 407 (TN). Residue Q307 coordinates a protein. D486, E499, and N501 together coordinate Mg(2+). Residues 565–704 (LASSRPLNRL…EQRSTSHRGS (140 aa)) form a disordered region. 2 stretches are compositionally biased toward pro residues: residues 576-588 (NPNP…ANPH) and 596-612 (HPHP…PPRP). Composition is skewed to low complexity over residues 616–629 (AASS…AAIS) and 654–667 (SDSS…SEPS).

Requires Mg(2+) as cofactor. As to expression, highly expressed in testis. Expressed in brain, heart, kidney, liver, lung, muscle and trachea.

It is found in the cytoplasm. The protein localises to the cytoskeleton. It localises to the cell projection. Its subcellular location is the cilium. The protein resides in the cilium axoneme. It catalyses the reaction (glycyl)(n)-glycyl-L-glutamyl-[protein] + glycine + ATP = (glycyl)(n+1)-glycyl-L-glutamyl-[protein] + ADP + phosphate + H(+). Functionally, polyglycylase which modifies both tubulin and non-tubulin proteins, generating polyglycine side chains of variable lengths on the gamma-carboxyl groups of specific glutamate residues of target proteins. Involved in the elongation step rather than the initiation step of the polyglycylation reaction. Polyglycylates alpha-tubulin and beta-tubulin. Polyglycylates non-tubulin proteins such as nucleosome assembly protein NAP1. The polypeptide is Protein polyglycylase TTLL10 (Mus musculus (Mouse)).